Here is a 634-residue protein sequence, read N- to C-terminus: 1-phosphatidylinositol 4,5-bisphosphate phosphodiesterase zeta-1 (634 aa).

One can recognise an EF-hand domain in the interval 35–70 (CNTIHVKYIFKDNDRLKQGRITIEEFRTIYRIITYR). Residues 155–299 (QDMTHPLTDY…LKFKILVRNK (145 aa)) form the PI-PLC X-box domain. Catalysis depends on residues His170 and His215. The tract at residues 312 to 345 (GSDMHGKVEEFEEEEEIEQEEDGSGAKEPEPVGD) is disordered. The segment covering 321–334 (EFEEEEEIEQEEDG) has biased composition (acidic residues). Positions 376–492 (LSDLVIYTKV…GYVLKPRFLR (117 aa)) constitute a PI-PLC Y-box domain. The C2 domain occupies 492–615 (RDKKTKFNPH…RGYRRVPLFS (124 aa)).

Interacts (via its C2 domain) with PtdIns(3)P and, to a lesser extent, PtdIns(5)P in vitro. The cofactor is Ca(2+).

It localises to the nucleus. Its subcellular location is the cytoplasm. The protein localises to the perinuclear region. The enzyme catalyses a 1,2-diacyl-sn-glycero-3-phospho-(1D-myo-inositol-4,5-bisphosphate) + H2O = 1D-myo-inositol 1,4,5-trisphosphate + a 1,2-diacyl-sn-glycerol + H(+). Its function is as follows. The production of the second messenger molecules diacylglycerol (DAG) and inositol 1,4,5-trisphosphate (IP3) is mediated by activated phosphatidylinositol-specific phospholipase C enzymes. In vitro, hydrolyzes PtdIns(4,5)P2 in a Ca(2+)-dependent manner. Triggers intracellular Ca(2+) oscillations in oocytes solely during M phase and is involved in inducing oocyte activation and initiating embryonic development up to the blastocyst stage. Is therefore a strong candidate for the egg-activating soluble sperm factor that is transferred from the sperm into the egg cytoplasm following gamete membrane fusion. May exert an inhibitory effect on phospholipase-C-coupled processes that depend on calcium ions and protein kinase C, including CFTR trafficking and function. In Bos taurus (Bovine), this protein is 1-phosphatidylinositol 4,5-bisphosphate phosphodiesterase zeta-1.